We begin with the raw amino-acid sequence, 53 residues long: uncharacterized protein (53 aa).

This is an uncharacterized protein from Bacillus subtilis (strain 168).